The primary structure comprises 830 residues: MASTPRIVIIGAGIVGTNLADELVTRGWNNITVLDQGPLNMPGGSTSHAPGLVFQTNPSKTMASFAKYTVEKLLSLTEDGVSCFNQVGGLEVATTETRLADLKRKLGYAAAWGIEGRLLSPAECQELYPLLDGENILGGLHVPSDGLASAARAVQLLIKRTESAGVTYRGSTTVTGIEQSGGRVTGVQTADGVIPADIVVSCAGFWGAKIGAMIGMAVPLLPLAHQYVKTTPVPAQQGRNDQPNGARLPILRHQDQDLYYREHGDRYGIGSYAHRPMPVDVDTLGAYAPETVSEHHMPSRLDFTLEDFLPAWEATKQLLPALADSEIEDGFNGIFSFTPDGGPLLGESKELDGFYVAEAVWVTHSAGVAKAMAELLTTGRSETDLGECDITRFEDVQLTPEYVSETSQQNFVEIYDVLHPLQPRLSPRNLRVSPFHARHKELGAFFLEAGGWERPYWFEANAALLKEMPAEWLPPARDAWSGMFSSPIAAAEAWKTRTAVAMYDMTPLKRLEVSGPGALKLLQELTTADLAKKPGAVTYTLLLDHAGGVRSDITVARLSEDTFQLGANGNIDTAYFERAARHQTQSGSATDWVQVRDTTGGTCCIGLWGPLARDLVSKVSDDDFTNDGLKYFRAKNVVIGGIPVTAMRLSYVGELGWELYTSADNGQRLWDALWQAGQPFGVIAAGRAAFSSLRLEKGYRSWGTDMTTEHDPFEAGLGFAVKMAKESFIGKGALEGRTEEASARRLRCLTIDDGRSIVLGKEPVFYKEQAVGYVTSAAYGYTVAKPIAYSYLPGTVSVGDSVDIEYFGRRITATVTEDPLYDPKMTRLRG.

FAD contacts are provided by residues 14–15, 35–36, 45–48, L52, and V174; these read IV, DQ, and STSH. A Pros-8alpha-FAD histidine modification is found at H48. Residues H225 and Y259 contribute to the active site. Residues Y259 and 360–363 each bind FAD; that span reads VWVT. Y539 serves as a coordination point for (6S)-5,6,7,8-tetrahydrofolate. D552 acts as the For 5,10-methylenetetrahydrofolate synthesis activity in catalysis. (6S)-5,6,7,8-tetrahydrofolate is bound by residues T554, G566, and 658–660; that span reads ELY.

Belongs to the GcvT family. It depends on FAD as a cofactor.

The catalysed reaction is N,N-dimethylglycine + O2 + H2O = sarcosine + formaldehyde + H2O2. It carries out the reaction N,N-dimethylglycine + (6S)-5,6,7,8-tetrahydrofolate + O2 = sarcosine + (6R)-5,10-methylene-5,6,7,8-tetrahydrofolate + H2O2. Functionally, catalyzes the oxidative demethylation of N,N-dimethylglycine to yield sarcosine, formaldehyde and hydrogen peroxide. The oxidation of dimethylglycine is coupled to the synthesis of 5,10-methylenetetrahydrofolate through an unusual substrate channeling mechanism. This channeling occurs by nonbiased diffusion of the iminium intermediate through a large solvent cavity connecting active site 1 (N-terminus) and active site 2 (C-terminus). The synthesis of 5,10-methylenetetrahydrofolate (at active site 2) prevents the accumulation of formaldehyde, formed by hydrolysis of the iminium intermediate product (at active site 1). Does not oxidize sarcosine. The sequence is that of Dimethylglycine oxidase (dmg) from Arthrobacter globiformis.